Reading from the N-terminus, the 226-residue chain is 7-cyano-7-deazaguanine synthase (226 aa).

Leu12 to Val22 serves as a coordination point for ATP. Residues Cys191, Cys201, Cys204, and Cys207 each coordinate Zn(2+).

Belongs to the QueC family. The cofactor is Zn(2+).

It carries out the reaction 7-carboxy-7-deazaguanine + NH4(+) + ATP = 7-cyano-7-deazaguanine + ADP + phosphate + H2O + H(+). It functions in the pathway purine metabolism; 7-cyano-7-deazaguanine biosynthesis. In terms of biological role, catalyzes the ATP-dependent conversion of 7-carboxy-7-deazaguanine (CDG) to 7-cyano-7-deazaguanine (preQ(0)). This Pseudomonas syringae pv. tomato (strain ATCC BAA-871 / DC3000) protein is 7-cyano-7-deazaguanine synthase.